The primary structure comprises 262 residues: Ribose-5-phosphate isomerase A (262 aa).

Residues 33–36, 89–92, and 102–105 each bind substrate; these read TGST, DGAD, and KGGG. Catalysis depends on Glu-111, which acts as the Proton acceptor. Lys-129 contributes to the substrate binding site.

This sequence belongs to the ribose 5-phosphate isomerase family. In terms of assembly, homodimer.

It carries out the reaction aldehydo-D-ribose 5-phosphate = D-ribulose 5-phosphate. Its pathway is carbohydrate degradation; pentose phosphate pathway; D-ribose 5-phosphate from D-ribulose 5-phosphate (non-oxidative stage): step 1/1. Its function is as follows. Catalyzes the reversible conversion of ribose-5-phosphate to ribulose 5-phosphate. The chain is Ribose-5-phosphate isomerase A from Cereibacter sphaeroides (strain ATCC 17023 / DSM 158 / JCM 6121 / CCUG 31486 / LMG 2827 / NBRC 12203 / NCIMB 8253 / ATH 2.4.1.) (Rhodobacter sphaeroides).